Reading from the N-terminus, the 428-residue chain is Gamma-glutamyl phosphate reductase (428 aa).

The protein belongs to the gamma-glutamyl phosphate reductase family.

It localises to the cytoplasm. It catalyses the reaction L-glutamate 5-semialdehyde + phosphate + NADP(+) = L-glutamyl 5-phosphate + NADPH + H(+). It functions in the pathway amino-acid biosynthesis; L-proline biosynthesis; L-glutamate 5-semialdehyde from L-glutamate: step 2/2. Functionally, catalyzes the NADPH-dependent reduction of L-glutamate 5-phosphate into L-glutamate 5-semialdehyde and phosphate. The product spontaneously undergoes cyclization to form 1-pyrroline-5-carboxylate. This is Gamma-glutamyl phosphate reductase from Hyphomonas neptunium (strain ATCC 15444).